Here is a 390-residue protein sequence, read N- to C-terminus: MKFVDEATIKVDAGDGGNGVVSFWREKFVAKGGPDGGDGGDGGDVYLEADENLNTLIDYRFNRFYNAERGKNGSGGNCTGKRGEDITLKVPVGTRAIDIDTGEKVAELMTHGMKQMVAKGGWHGLGNTRFKSSVNRAPRQKTLGTKGEVRELRLELLLLADVGMLGLPNAGKSTFIRAVSAAKPKVADYPFTTLIPSLGVVRARGNKSFVVADIPGLIEGAADGAGLGVRFLKHLERCRVLLHVIDILPIDGSDPVQNALTIIDELEQYSEKVASKPRWLLFNKTDLLLEEEADEKINEILEALAWEDRYFKIAAVSRTGTQELCDELADFMDTLPKEIQTEEEKAANKVDFMWDDYHKDAMSGKDVVTEDDWDDWDDEEDDGHVIYVRD.

The Obg domain occupies 1–159; that stretch reads MKFVDEATIK…RELRLELLLL (159 aa). The 174-residue stretch at 160 to 333 folds into the OBG-type G domain; that stretch reads ADVGMLGLPN…LCDELADFMD (174 aa). GTP contacts are provided by residues 166 to 173, 191 to 195, 213 to 216, 283 to 286, and 314 to 316; these read GLPNAGKS, FTTLI, DIPG, NKTD, and AAV. Serine 173 and threonine 193 together coordinate Mg(2+).

It belongs to the TRAFAC class OBG-HflX-like GTPase superfamily. OBG GTPase family. Monomer. It depends on Mg(2+) as a cofactor.

The protein resides in the cytoplasm. Functionally, an essential GTPase which binds GTP, GDP and possibly (p)ppGpp with moderate affinity, with high nucleotide exchange rates and a fairly low GTP hydrolysis rate. Plays a role in control of the cell cycle, stress response, ribosome biogenesis and in those bacteria that undergo differentiation, in morphogenesis control. This Aliivibrio fischeri (strain ATCC 700601 / ES114) (Vibrio fischeri) protein is GTPase Obg.